The following is a 242-amino-acid chain: Trypsin-1 (242 aa).

A signal peptide spans 1–15; it reads MISLVFVLLIGAAFA. The propeptide at 16 to 20 is activation peptide; that stretch reads TEDDK. In terms of domain architecture, Peptidase S1 spans 21–240; that stretch reads IVGGYECKAY…FNDWLTSTMA (220 aa). 6 cysteine pairs are disulfide-bonded: Cys-27/Cys-156, Cys-45/Cys-61, Cys-129/Cys-229, Cys-136/Cys-202, Cys-167/Cys-181, and Cys-192/Cys-216. The active-site Charge relay system is the His-60. Residues Glu-72, Asn-74, Val-77, and Glu-82 each contribute to the Ca(2+) site. Asp-104 serves as the catalytic Charge relay system. Residue Ser-196 is the Charge relay system of the active site.

Belongs to the peptidase S1 family. Ca(2+) serves as cofactor.

The protein resides in the secreted. Its subcellular location is the extracellular space. It catalyses the reaction Preferential cleavage: Arg-|-Xaa, Lys-|-Xaa.. This is Trypsin-1 from Salmo salar (Atlantic salmon).